The sequence spans 494 residues: UDP-N-acetylmuramate--L-alanine ligase (494 aa).

140–146 provides a ligand contact to ATP; the sequence is GTHGKTT.

This sequence belongs to the MurCDEF family.

The protein resides in the cytoplasm. The catalysed reaction is UDP-N-acetyl-alpha-D-muramate + L-alanine + ATP = UDP-N-acetyl-alpha-D-muramoyl-L-alanine + ADP + phosphate + H(+). Its pathway is cell wall biogenesis; peptidoglycan biosynthesis. Cell wall formation. This is UDP-N-acetylmuramate--L-alanine ligase from Trichormus variabilis (strain ATCC 29413 / PCC 7937) (Anabaena variabilis).